Consider the following 178-residue polypeptide: CDP-archaeol synthase (178 aa).

5 consecutive transmembrane segments (helical) span residues 3-23 (LLLLLFSAIWYILPAYVANAV), 56-76 (FFGILFGIITGILQHFIVILY), 91-111 (IILGFLLGTGALFGDMLGSFI), 123-143 (APLLDQMTFIVFALIFAYPLY), and 149-169 (LMVILLVISPIIHFSSNIIAY).

The protein belongs to the CDP-archaeol synthase family. The cofactor is Mg(2+).

The protein resides in the cell membrane. The catalysed reaction is 2,3-bis-O-(geranylgeranyl)-sn-glycerol 1-phosphate + CTP + H(+) = CDP-2,3-bis-O-(geranylgeranyl)-sn-glycerol + diphosphate. The protein operates within membrane lipid metabolism; glycerophospholipid metabolism. Its function is as follows. Catalyzes the formation of CDP-2,3-bis-(O-geranylgeranyl)-sn-glycerol (CDP-archaeol) from 2,3-bis-(O-geranylgeranyl)-sn-glycerol 1-phosphate (DGGGP) and CTP. This reaction is the third ether-bond-formation step in the biosynthesis of archaeal membrane lipids. This chain is CDP-archaeol synthase, found in Methanococcus maripaludis (strain C7 / ATCC BAA-1331).